Reading from the N-terminus, the 117-residue chain is DNA-directed RNA polymerase subunit omega (117 aa).

The protein belongs to the RNA polymerase subunit omega family. The RNAP catalytic core consists of 2 alpha, 1 beta, 1 beta' and 1 omega subunit. When a sigma factor is associated with the core the holoenzyme is formed, which can initiate transcription.

The catalysed reaction is RNA(n) + a ribonucleoside 5'-triphosphate = RNA(n+1) + diphosphate. Functionally, promotes RNA polymerase assembly. Latches the N- and C-terminal regions of the beta' subunit thereby facilitating its interaction with the beta and alpha subunits. This Ruegeria pomeroyi (strain ATCC 700808 / DSM 15171 / DSS-3) (Silicibacter pomeroyi) protein is DNA-directed RNA polymerase subunit omega.